The following is a 308-amino-acid chain: Aspartate carbamoyltransferase catalytic subunit (308 aa).

Carbamoyl phosphate is bound by residues arginine 50 and threonine 51. Residue lysine 78 coordinates L-aspartate. The carbamoyl phosphate site is built by arginine 100, histidine 131, and glutamine 134. 2 residues coordinate L-aspartate: arginine 164 and arginine 216. Positions 259 and 260 each coordinate carbamoyl phosphate.

This sequence belongs to the aspartate/ornithine carbamoyltransferase superfamily. ATCase family. In terms of assembly, heterododecamer (2C3:3R2) of six catalytic PyrB chains organized as two trimers (C3), and six regulatory PyrI chains organized as three dimers (R2).

It catalyses the reaction carbamoyl phosphate + L-aspartate = N-carbamoyl-L-aspartate + phosphate + H(+). It participates in pyrimidine metabolism; UMP biosynthesis via de novo pathway; (S)-dihydroorotate from bicarbonate: step 2/3. In terms of biological role, catalyzes the condensation of carbamoyl phosphate and aspartate to form carbamoyl aspartate and inorganic phosphate, the committed step in the de novo pyrimidine nucleotide biosynthesis pathway. This is Aspartate carbamoyltransferase catalytic subunit from Oenococcus oeni (strain ATCC BAA-331 / PSU-1).